Consider the following 147-residue polypeptide: Biogenesis of lysosome-related organelles complex 1 subunit 1 (147 aa).

Disordered regions lie at residues 1–25 (MLTSMVKEHHKEQAKRKQEQEVRRK) and 125–147 (SSGAGTSLEASTSASASANPSAT).

The protein belongs to the BLOC1S1 family. Component of the biogenesis of lysosome-related organelles complex-1 (BLOC-1) composed of Blos1, Blos2, Blos3, Blos4, Dysb, Muted, Pldn and Snapin. Interacts with Pldn.

In terms of biological role, component of the biogenesis of lysosome-related organelles complex-1 (BLOC-1) involved in pigment granule biogenesis and membrane trafficking in synapses. In response to high synaptic activity at neuromuscular junctions, stabilizes Pldn protein levels and, together with Pldn, plays a role in promoting efficient synaptic vesicle recycling and re-formation through early endosomes. The polypeptide is Biogenesis of lysosome-related organelles complex 1 subunit 1 (Drosophila melanogaster (Fruit fly)).